The primary structure comprises 137 residues: Molluscan insulin-related peptide 2 (137 aa).

Positions 1-31 (MVGVRLVFTNAFVVTVLLTLLLDVVVKPAEG) are cleaved as a signal peptide. Gln-32 is modified (pyrrolidone carboxylic acid). Cystine bridges form between Cys-47–Cys-123, Cys-59–Cys-136, and Cys-122–Cys-127. Residues 71 to 83 (DAETGWLLPETMV) constitute a propeptide, C-beta peptide like. A propeptide spans 86–110 (NAETDLDDPLRNIKLSSESALTYLT) (C-alpha peptide like). Pyrrolidone carboxylic acid is present on Gln-113.

Belongs to the insulin family. As to quaternary structure, heterodimer of a B chain and an A chain linked by two disulfide bonds. In terms of tissue distribution, expressed in the cerebral light-green cells which are giant neuroendocrines cells involved in the control of growth.

The protein resides in the cytoplasmic vesicle. Its subcellular location is the secretory vesicle. This Lymnaea stagnalis (Great pond snail) protein is Molluscan insulin-related peptide 2.